The primary structure comprises 241 residues: Small ribosomal subunit protein uS3 (241 aa).

The KH type-2 domain maps to 39 to 107 (IREILHKELK…DVVINIVEIR (69 aa)). Residues 217-241 (KRMAEGETGGGGDRGGRQRRDNAAV) form a disordered region. The segment covering 230 to 241 (RGGRQRRDNAAV) has biased composition (basic and acidic residues).

Belongs to the universal ribosomal protein uS3 family. Part of the 30S ribosomal subunit. Forms a tight complex with proteins S10 and S14.

Functionally, binds the lower part of the 30S subunit head. Binds mRNA in the 70S ribosome, positioning it for translation. The polypeptide is Small ribosomal subunit protein uS3 (Bradyrhizobium diazoefficiens (strain JCM 10833 / BCRC 13528 / IAM 13628 / NBRC 14792 / USDA 110)).